A 163-amino-acid chain; its full sequence is Transcription antitermination protein NusB (163 aa).

The protein belongs to the NusB family.

Functionally, involved in transcription antitermination. Required for transcription of ribosomal RNA (rRNA) genes. Binds specifically to the boxA antiterminator sequence of the ribosomal RNA (rrn) operons. The sequence is that of Transcription antitermination protein NusB from Chlorobium luteolum (strain DSM 273 / BCRC 81028 / 2530) (Pelodictyon luteolum).